The primary structure comprises 393 residues: CCA-adding enzyme (393 aa).

The ATP site is built by Gly27 and Arg30. The CTP site is built by Gly27 and Arg30. 2 residues coordinate Mg(2+): Asp40 and Asp42. ATP contacts are provided by Arg111, Asp154, Arg157, Arg160, and Arg163. CTP is bound by residues Arg111, Asp154, Arg157, Arg160, and Arg163.

It belongs to the tRNA nucleotidyltransferase/poly(A) polymerase family. Bacterial CCA-adding enzyme type 3 subfamily. As to quaternary structure, homodimer. Mg(2+) is required as a cofactor.

It catalyses the reaction a tRNA precursor + 2 CTP + ATP = a tRNA with a 3' CCA end + 3 diphosphate. The enzyme catalyses a tRNA with a 3' CCA end + 2 CTP + ATP = a tRNA with a 3' CCACCA end + 3 diphosphate. In terms of biological role, catalyzes the addition and repair of the essential 3'-terminal CCA sequence in tRNAs without using a nucleic acid template. Adds these three nucleotides in the order of C, C, and A to the tRNA nucleotide-73, using CTP and ATP as substrates and producing inorganic pyrophosphate. tRNA 3'-terminal CCA addition is required both for tRNA processing and repair. Also involved in tRNA surveillance by mediating tandem CCA addition to generate a CCACCA at the 3' terminus of unstable tRNAs. While stable tRNAs receive only 3'-terminal CCA, unstable tRNAs are marked with CCACCA and rapidly degraded. This chain is CCA-adding enzyme, found in Listeria monocytogenes serotype 4a (strain HCC23).